The sequence spans 270 residues: Putative [LysW]-aminoadipate/[LysW]-glutamate kinase (270 aa).

Residues 42 to 43 (GG), R69, and N177 each bind substrate.

The protein belongs to the acetylglutamate kinase family. LysZ subfamily.

It is found in the cytoplasm. It catalyses the reaction [amino-group carrier protein]-C-terminal-N-(1,4-dicarboxybutan-1-yl)-L-glutamine + ATP = [amino-group carrier protein]-C-terminal-N-(1-carboxy-5-phosphooxy-5-oxopentan-1-yl)-L-glutamine + ADP. The catalysed reaction is [amino-group carrier protein]-C-terminal-gamma-(L-glutamyl)-L-glutamate + ATP = [amino-group carrier protein]-C-terminal-gamma-(5-phospho-L-glutamyl)-L-glutamate + ADP. It functions in the pathway amino-acid biosynthesis; L-lysine biosynthesis via AAA pathway; L-lysine from L-alpha-aminoadipate (Thermus route): step 2/5. The protein operates within amino-acid biosynthesis; L-arginine biosynthesis. Functionally, involved in both the arginine and lysine biosynthetic pathways. Phosphorylates the LysW-bound precursors glutamate (for arginine biosynthesis), respectively alpha-aminoadipate (for lysine biosynthesis). In Aeropyrum pernix (strain ATCC 700893 / DSM 11879 / JCM 9820 / NBRC 100138 / K1), this protein is Putative [LysW]-aminoadipate/[LysW]-glutamate kinase.